A 149-amino-acid polypeptide reads, in one-letter code: Probable flagellum biosynthesis repressor protein FlbT (149 aa).

It belongs to the FlbT family.

Has a post-transcriptional repressor function in flagellum biogenesis. Associates with the 5'-UTR of fljK mRNA and promotes its degradation. This Rhizobium etli (strain CIAT 652) protein is Probable flagellum biosynthesis repressor protein FlbT.